The sequence spans 61 residues: Small ribosomal subunit protein uS14 (61 aa).

Residues 1–12 are compositionally biased toward acidic residues; that stretch reads MSESETTDEPDS. The interval 1–25 is disordered; it reads MSESETTDEPDSETASSERTGQLES. Zn(2+) contacts are provided by Cys26, Cys29, Cys44, and Cys47.

The protein belongs to the universal ribosomal protein uS14 family. Zinc-binding uS14 subfamily. In terms of assembly, part of the 30S ribosomal subunit. It depends on Zn(2+) as a cofactor.

Binds 16S rRNA, required for the assembly of 30S particles. In Haloarcula marismortui (strain ATCC 43049 / DSM 3752 / JCM 8966 / VKM B-1809) (Halobacterium marismortui), this protein is Small ribosomal subunit protein uS14.